Here is a 260-residue protein sequence, read N- to C-terminus: G patch domain-containing protein 11 (260 aa).

The stretch at 25–61 forms a coiled coil; that stretch reads MLRQIREARRKEEKRQEANLKNRQKSIKEEEQERRDM. Residues 33-60 form a disordered region; sequence RRKEEKRQEANLKNRQKSIKEEEQERRD. The region spanning 69–115 is the G-patch domain; it reads CENKGFALLQKMGYKSGQALGKSGDGIVEPIPLNVKTGKSGIGHETL. K123 bears the N6-acetyllysine mark. The interval 187–212 is disordered; sequence WLRPEEETEEETEEEKEQDEDEYKSE. A compositionally biased stretch (acidic residues) spans 192-210; that stretch reads EETEEETEEEKEQDEDEYK.

It belongs to the GPATCH11 family.

The protein resides in the chromosome. Its subcellular location is the centromere. It is found in the kinetochore. This is G patch domain-containing protein 11 (GPATCH11) from Bos taurus (Bovine).